The sequence spans 183 residues: Putative manganese efflux pump MntP (183 aa).

6 helical membrane-spanning segments follow: residues 6 to 26 (LFLI…CIGL), 40 to 60 (IYFG…GFLF), 64 to 84 (IATM…IIMI), 101 to 121 (MNII…FTAL), 135 to 155 (LFIG…SKYL), and 158 to 178 (IDVI…FFGL).

This sequence belongs to the MntP (TC 9.B.29) family.

It is found in the cell membrane. Its function is as follows. Probably functions as a manganese efflux pump. The chain is Putative manganese efflux pump MntP from Clostridium tetani (strain Massachusetts / E88).